A 172-amino-acid chain; its full sequence is Ribosome maturation factor RimM (172 aa).

The PRC barrel domain occupies 95–168 (QEGEFYYHQI…CVDVELMEGL (74 aa)).

The protein belongs to the RimM family. As to quaternary structure, binds ribosomal protein uS19.

It is found in the cytoplasm. Functionally, an accessory protein needed during the final step in the assembly of 30S ribosomal subunit, possibly for assembly of the head region. Essential for efficient processing of 16S rRNA. May be needed both before and after RbfA during the maturation of 16S rRNA. It has affinity for free ribosomal 30S subunits but not for 70S ribosomes. In Streptococcus pyogenes serotype M49 (strain NZ131), this protein is Ribosome maturation factor RimM.